Reading from the N-terminus, the 441-residue chain is Rho-associated protein kinase 1 (441 aa).

Positions 1-99 form a coiled coil; it reads NSKSQMDKDY…RLEQEVNEHK (99 aa). Residues 114 to 353 are SHROOM3 binding; the sequence is EAKSVAMCEM…TLSRLEETNS (240 aa). The RhoBD domain occupies 356–422; that stretch reads TKDIELLRKE…LAEIMNRKDF (67 aa). Residues 418–441 are a coiled coil; the sequence is NRKDFKIDRKKANTQDLRKKKKKK.

The protein belongs to the protein kinase superfamily. AGC Ser/Thr protein kinase family. In terms of assembly, homodimer. Interacts with RHOA (activated by GTP), RHOB, RHOC, GEM, MYLC2B, RHOE, PPP1R12A, LIMK1, LIMK2, TSG101, CHORDC1, DAPK3, PFN1, PTEN and JIP3. Interacts with FHOD1 in a Src-dependent manner. Interacts with ITGB1BP1 (via N-terminus and PTB domain). Interacts with SHROOM3. It depends on Mg(2+) as a cofactor.

It is found in the cytoplasm. The protein resides in the golgi apparatus membrane. The protein localises to the cytoskeleton. Its subcellular location is the microtubule organizing center. It localises to the centrosome. It is found in the centriole. The protein resides in the cell projection. The protein localises to the bleb. Its subcellular location is the cell membrane. It localises to the lamellipodium. It is found in the ruffle. The catalysed reaction is L-seryl-[protein] + ATP = O-phospho-L-seryl-[protein] + ADP + H(+). The enzyme catalyses L-threonyl-[protein] + ATP = O-phospho-L-threonyl-[protein] + ADP + H(+). With respect to regulation, activated by RHOA binding. Inhibited by Y-27632. Protein kinase which is a key regulator of the actin cytoskeleton and cell polarity. Involved in regulation of smooth muscle contraction, actin cytoskeleton organization, stress fiber and focal adhesion formation, neurite retraction, cell adhesion and motility via phosphorylation of DAPK3, GFAP, LIMK1, LIMK2, MYL9/MLC2, TPPP, PFN1 and PPP1R12A. Phosphorylates FHOD1 and acts synergistically with it to promote SRC-dependent non-apoptotic plasma membrane blebbing. Phosphorylates JIP3 and regulates the recruitment of JNK to JIP3 upon UVB-induced stress. Acts as a suppressor of inflammatory cell migration by regulating PTEN phosphorylation and stability. Acts as a negative regulator of VEGF-induced angiogenic endothelial cell activation. Required for centrosome positioning and centrosome-dependent exit from mitosis. Plays a role in terminal erythroid differentiation. Inhibits podocyte motility via regulation of actin cytoskeletal dynamics and phosphorylation of CFL1. Promotes keratinocyte terminal differentiation. Involved in osteoblast compaction through the fibronectin fibrillogenesis cell-mediated matrix assembly process, essential for osteoblast mineralization. May regulate closure of the eyelids and ventral body wall by inducing the assembly of actomyosin bundles. The chain is Rho-associated protein kinase 1 (ROCK1) from Bos taurus (Bovine).